The chain runs to 214 residues: MGLAGVCALRRSAGYILVGGAGGQSAAAAARRYSEGEWASGGVRSFSRAAAAMAPIKVGDAIPAVEVFEGEPGNKVNLAELFKGKKGVLFGVPGAFTPGCSKTHLPGFVEQAEALKAKGVQVVACLSVNDAFVTGEWGRAHKAEGKVRLLADPTGAFGKETDLLLDDSLVSIFGNRRLKRFSMVVQDGIVKALNVEPDGTGLTCSLAPNIISQL.

The N-terminal 52 residues, 1–52, are a transit peptide targeting the mitochondrion; the sequence is MGLAGVCALRRSAGYILVGGAGGQSAAAAARRYSEGEWASGGVRSFSRAAAA. The region spanning 56–214 is the Thioredoxin domain; sequence IKVGDAIPAV…SLAPNIISQL (159 aa). N6-acetyllysine is present on lysine 75. The residue at position 83 (lysine 83) is an N6-acetyllysine; alternate. Lysine 83 is modified (N6-succinyllysine; alternate). Cysteine 100 functions as the Cysteine sulfenic acid (-SOH) intermediate in the catalytic mechanism. Cysteine 100 carries S-palmitoyl cysteine lipidation. A disulfide bridge links cysteine 100 with cysteine 204. Position 116 is an N6-succinyllysine (lysine 116). 2 positions are modified to phosphoserine: serine 171 and serine 182. A Microbody targeting signal motif is present at residues 212 to 214; it reads SQL.

Belongs to the peroxiredoxin family. Prx5 subfamily. Monomer. In terms of processing, S-palmitoylated. Palmitoylation occurs on the active site, inhibiting its reactivity; therefore PRDX5 palmitoylation status determines its antioxidant capacity. Post-translationally, S-palmitoylated. Depalmitoylated by ABHD10. As to expression, widely expressed.

The protein localises to the mitochondrion. The protein resides in the cytoplasm. It localises to the peroxisome matrix. The enzyme catalyses a hydroperoxide + [thioredoxin]-dithiol = an alcohol + [thioredoxin]-disulfide + H2O. Thiol-specific peroxidase that catalyzes the reduction of hydrogen peroxide and organic hydroperoxides to water and alcohols, respectively. Plays a role in cell protection against oxidative stress by detoxifying peroxides and as sensor of hydrogen peroxide-mediated signaling events. The sequence is that of Peroxiredoxin-5, mitochondrial from Homo sapiens (Human).